A 528-amino-acid polypeptide reads, in one-letter code: MLKNILLCSLQISLLGMSLGGNVLIWPMEGSHWLNVKIIIDELLRKEHNVTVLVASGALFITPSSISPSLTFEIYPVPFGKEKIESVIKDFVLTWLENRPSPSTIWTFYKEMAKVIEEFHLVSRGICDGVLKNEKLMSKLQKEKFEVLLSDPVFPCGDIVALKLGIPFIYSLRFSPASTVEKHCGKVPFPPSYVPAILSELTDQMSFTDRVRNFISYRMQDYMFETLWKQWDSYYTKALGRPTTLCETMGKAEIWLMRTYWDFEFPRPYLPNFEFVGGLHCKPAKPLPKEMEEFVQTSGEHGIVVFSLGSMVKNLTDEKANLIASALAQIPQKVLWRYKGKIPDTLGSNTRLFDWIPQNDLLGHPKTRAFITHGGTNGIYEAIYHGIPMVGVPMFADQPDNIAHMKAKGAAVEVNMNTMTSSDLLNALRTVINEPSYKENAMRLSRIHHDQPVKPLDRAVFWIEFVMRHKGAKHLRVAAHDLSWFQYHSLDVIGFLLACVASAILLVAKCCLFIFQKVGKTGKKKKRD.

An N-terminal signal peptide occupies residues M1–G21. Topologically, residues N22–G494 are extracellular. N49 carries N-linked (GlcNAc...) asparagine glycosylation. K135 carries the N6-succinyllysine modification. N314 is a glycosylation site (N-linked (GlcNAc...) asparagine). The helical transmembrane segment at F495–F515 threads the bilayer. Topologically, residues Q516–D528 are cytoplasmic.

This sequence belongs to the UDP-glycosyltransferase family.

Its subcellular location is the membrane. It catalyses the reaction glucuronate acceptor + UDP-alpha-D-glucuronate = acceptor beta-D-glucuronoside + UDP + H(+). It carries out the reaction 16beta,17beta-estriol + UDP-alpha-D-glucuronate = 16beta,17beta-estriol 16-O-(beta-D-glucuronate) + UDP + H(+). The enzyme catalyses 16alpha,17alpha-estriol + UDP-alpha-D-glucuronate = 16alpha,17alpha-estriol 16-O-(beta-D-glucuronate) + UDP + H(+). The catalysed reaction is 17alpha-estradiol + UDP-alpha-D-glucuronate = 17alpha-estradiol 17-O-(beta-D-glucuronate) + UDP + H(+). It catalyses the reaction 17alpha-estradiol + UDP-alpha-D-glucuronate = 17alpha-estradiol 3-O-(beta-D-glucuronate) + UDP + H(+). It carries out the reaction 17beta-estradiol + UDP-alpha-D-glucuronate = 17beta-estradiol 3-O-(beta-D-glucuronate) + UDP + H(+). The enzyme catalyses 17beta-estradiol + UDP-alpha-D-glucuronate = 17beta-estradiol 17-O-(beta-D-glucuronate) + UDP + H(+). The catalysed reaction is testosterone + UDP-alpha-D-glucuronate = testosterone 17-O-(beta-D-glucuronate) + UDP + H(+). It catalyses the reaction epitestosterone + UDP-alpha-D-glucuronate = epitestosterone 17-O-(beta-D-glucuronate) + UDP + H(+). It carries out the reaction lithocholate + UDP-alpha-D-glucuronate = lithocholoyl-3-O-(beta-D-glucuronate) + UDP + H(+). The enzyme catalyses lithocholate + UDP-alpha-D-glucuronate = lithocholoyl-24-O-(beta-D-glucuronate) + UDP. The catalysed reaction is deoxycholate + UDP-alpha-D-glucuronate = deoxycholoyl-24-O-(beta-D-glucuronate) + UDP. It catalyses the reaction hyodeoxycholate + UDP-alpha-D-glucuronate = hyodeoxycholate 6-O-(beta-D-glucuronate) + UDP + H(+). It carries out the reaction hyocholate + UDP-alpha-D-glucuronate = hyocholoyl-24-O-(beta-D-glucuronate) + UDP. Its function is as follows. UDP-glucuronosyltransferase (UGT) that catalyzes phase II biotransformation reactions in which lipophilic substrates are conjugated with glucuronic acid to increase the metabolite's water solubility, thereby facilitating excretion into either the urine or bile. Essential for the elimination and detoxification of drugs, xenobiotics and endogenous compounds. Catalyzes the glucuronidation of endogenous steroid hormones such as androgens (testosterones) and estrogens (estradiol and estriol). Contributes to bile acid (BA) detoxification by catalyzing the glucuronidation of BA substrates, which are natural detergents for dietary lipids absorption. Shows a high affinity to aliphatic odorants such as citronellol as well as olfactory tissue specificity, and therefore may be involved in olfaction. The sequence is that of UDP-glucuronosyltransferase 2A1 from Mus musculus (Mouse).